The chain runs to 307 residues: NAD kinase (307 aa).

Residue aspartate 80 is the Proton acceptor of the active site. Residues 80–81, histidine 85, 154–155, histidine 165, histidine 182, aspartate 184, 195–200, and glutamine 254 contribute to the NAD(+) site; these read DG, ND, and TAYALS.

The protein belongs to the NAD kinase family. It depends on a divalent metal cation as a cofactor.

It is found in the cytoplasm. It carries out the reaction NAD(+) + ATP = ADP + NADP(+) + H(+). In terms of biological role, involved in the regulation of the intracellular balance of NAD and NADP, and is a key enzyme in the biosynthesis of NADP. Catalyzes specifically the phosphorylation on 2'-hydroxyl of the adenosine moiety of NAD to yield NADP. This is NAD kinase from Acinetobacter baylyi (strain ATCC 33305 / BD413 / ADP1).